Reading from the N-terminus, the 318-residue chain is UDP-3-O-acylglucosamine N-acyltransferase 1 (318 aa).

His-230 serves as the catalytic Proton acceptor.

Belongs to the transferase hexapeptide repeat family. LpxD subfamily. As to quaternary structure, homotrimer.

The catalysed reaction is a UDP-3-O-[(3R)-3-hydroxyacyl]-alpha-D-glucosamine + a (3R)-hydroxyacyl-[ACP] = a UDP-2-N,3-O-bis[(3R)-3-hydroxyacyl]-alpha-D-glucosamine + holo-[ACP] + H(+). It functions in the pathway bacterial outer membrane biogenesis; LPS lipid A biosynthesis. In terms of biological role, catalyzes the N-acylation of UDP-3-O-acylglucosamine using 3-hydroxyacyl-ACP as the acyl donor. Is involved in the biosynthesis of lipid A, a phosphorylated glycolipid that anchors the lipopolysaccharide to the outer membrane of the cell. The protein is UDP-3-O-acylglucosamine N-acyltransferase 1 of Sulfurimonas denitrificans (strain ATCC 33889 / DSM 1251) (Thiomicrospira denitrificans (strain ATCC 33889 / DSM 1251)).